We begin with the raw amino-acid sequence, 196 residues long: Cupin-domain-containing oxidoreductase srdD (196 aa).

The interval 99 to 165 (DFGPGVESPL…GNGTLPGRVM (67 aa)) is cupin-like domain.

It belongs to the virC family.

Its function is as follows. Highly reducing polyketide synthase; part of the gene cluster that mediates the biosynthesis of sordarial, a salicylic aldehyde structurally related to the phytotoxin pyriculol. The most interesting aspect of this pathway is formation of an aromatic product from the highly reducing polyketide synthase srdA. SrdA synthesizes a reduced polyketide chain from one molecule of acetyl-CoA and five molecules of malonyl-CoA. The polyketide chain is then reductively released as an aldehyde. The oxidoreductases srdC, srdD and srdE then oxidize one of the hydroxy groups to facilitate the intramolecular aldol condensation, followed by dehydration to yield a salicylic aldehyde. This aldehyde can undergo facile reduction by endogenous reductases to yield the alcohol 1-hydroxy-2-hydroxymethyl-3-pent-1,3-dienylbenzene. The flavin-dependent srdI counteract against the propensity of the aldehydes to be reduced under physiological conditions and is responsible for reoxidizing 1-hydroxy-2-hydroxymethyl-3-pent-1,3-dienylbenzene back to the salicylic aldehyde. This salicylic aldehyde is then selectively epoxidized by the cupin-domain-containing oxidoreductase srdB to yield the epoxide, which can be hydrolyzed stereoselectively by the hydrolase srdG to give the final product sordarial. The chain is Cupin-domain-containing oxidoreductase srdD from Neurospora crassa (strain ATCC 24698 / 74-OR23-1A / CBS 708.71 / DSM 1257 / FGSC 987).